The primary structure comprises 155 residues: Ribosomal RNA large subunit methyltransferase H (155 aa).

S-adenosyl-L-methionine-binding positions include L73, G104, and 123-128 (LSPLTL).

Belongs to the RNA methyltransferase RlmH family. As to quaternary structure, homodimer.

The protein localises to the cytoplasm. The catalysed reaction is pseudouridine(1915) in 23S rRNA + S-adenosyl-L-methionine = N(3)-methylpseudouridine(1915) in 23S rRNA + S-adenosyl-L-homocysteine + H(+). Specifically methylates the pseudouridine at position 1915 (m3Psi1915) in 23S rRNA. The protein is Ribosomal RNA large subunit methyltransferase H of Pseudomonas syringae pv. tomato (strain ATCC BAA-871 / DC3000).